The primary structure comprises 868 residues: DNA topoisomerase 1 (868 aa).

In terms of domain architecture, Toprim spans 3–148 (KSLVIVESPA…RFSRVVFNEI (146 aa)). Mg(2+)-binding residues include Glu-9 and Asp-117. One can recognise a Topo IA-type catalytic domain in the interval 164–581 (NLDRVNAQQT…QFFKDFSQQL (418 aa)). Residues 198 to 203 (SAGRVQ) are interaction with DNA. Tyr-325 serves as the catalytic O-(5'-phospho-DNA)-tyrosine intermediate. C4-type zinc fingers lie at residues 605-636 (CPTCGRKMAIRTASTGVFLGCSGYALPPKERC), 667-694 (CPKCGTAMDSYLIDPERKIHICGHNPNC), and 716-739 (CDKCGADMHLKLGRFGKYMGCTSC).

Belongs to the type IA topoisomerase family. In terms of assembly, monomer. Mg(2+) serves as cofactor.

It carries out the reaction ATP-independent breakage of single-stranded DNA, followed by passage and rejoining.. Releases the supercoiling and torsional tension of DNA, which is introduced during the DNA replication and transcription, by transiently cleaving and rejoining one strand of the DNA duplex. Introduces a single-strand break via transesterification at a target site in duplex DNA. The scissile phosphodiester is attacked by the catalytic tyrosine of the enzyme, resulting in the formation of a DNA-(5'-phosphotyrosyl)-enzyme intermediate and the expulsion of a 3'-OH DNA strand. The free DNA strand then undergoes passage around the unbroken strand, thus removing DNA supercoils. Finally, in the religation step, the DNA 3'-OH attacks the covalent intermediate to expel the active-site tyrosine and restore the DNA phosphodiester backbone. The polypeptide is DNA topoisomerase 1 (Pasteurella multocida (strain Pm70)).